We begin with the raw amino-acid sequence, 369 residues long: Chaperone protein DnaJ (369 aa).

The J domain maps to 4–69; the sequence is SYYEILEVEK…KKRALYDRYG (66 aa). Residues 130–207 form a CR-type zinc finger; it reads GCKKTIKVQY…CKGKTYILKD (78 aa). Residues C143, C146, C159, C162, C181, C184, C195, and C198 each coordinate Zn(2+). CXXCXGXG motif repeat units follow at residues 143–150, 159–166, 181–188, and 195–202; these read CESCDGTG, CKQCNGQG, CGACQGKG, and CQACKGKT.

Belongs to the DnaJ family. As to quaternary structure, homodimer. Requires Zn(2+) as cofactor.

Its subcellular location is the cytoplasm. In terms of biological role, participates actively in the response to hyperosmotic and heat shock by preventing the aggregation of stress-denatured proteins and by disaggregating proteins, also in an autonomous, DnaK-independent fashion. Unfolded proteins bind initially to DnaJ; upon interaction with the DnaJ-bound protein, DnaK hydrolyzes its bound ATP, resulting in the formation of a stable complex. GrpE releases ADP from DnaK; ATP binding to DnaK triggers the release of the substrate protein, thus completing the reaction cycle. Several rounds of ATP-dependent interactions between DnaJ, DnaK and GrpE are required for fully efficient folding. Also involved, together with DnaK and GrpE, in the DNA replication of plasmids through activation of initiation proteins. The sequence is that of Chaperone protein DnaJ from Helicobacter pylori (strain ATCC 700392 / 26695) (Campylobacter pylori).